The sequence spans 454 residues: Epoxide hydrolase 1 (454 aa).

The chain crosses the membrane as a helical span at residues 1 to 21 (MWLEILLASVLGFVIYWFVSK). The Cytoplasmic portion of the chain corresponds to 22 to 454 (DKEETLLLGD…RKFMGLLEQQ (433 aa)). Asp226 acts as the Nucleophile in catalysis. Arg294 is modified (dimethylated arginine). The active-site Proton donor is Tyr373. The Proton acceptor role is filled by His430.

The protein belongs to the peptidase S33 family.

Its subcellular location is the microsome membrane. It is found in the endoplasmic reticulum membrane. It carries out the reaction cis-stilbene oxide + H2O = (1R,2R)-hydrobenzoin. The enzyme catalyses 1-(4-methoxyphenyl)-N-methyl-N-[(3-methyloxetan-3-yl)methyl]methanamine + H2O = 2-{[(4-methoxybenzyl)(methyl)amino]methyl}-2-methylpropane-1,3-diol. It catalyses the reaction 8,9-epoxy-(5Z,11Z,14Z)-eicosatrienoate + H2O = 8,9-dihydroxy-(5Z,11Z,14Z)-eicosatrienoate. The catalysed reaction is 11,12-epoxy-(5Z,8Z,14Z)-eicosatrienoate + H2O = 11,12-dihydroxy-(5Z,8Z,14Z)-eicosatrienoate. It carries out the reaction 2-(5Z,8Z,11Z,14Z-eicosatetraenoyl)-glycerol + H2O = glycerol + (5Z,8Z,11Z,14Z)-eicosatetraenoate + H(+). Its activity is regulated as follows. Inhibited by 10-hydroxystearamide and methoxy-arachidonyl fluorophosphate. Its function is as follows. Biotransformation enzyme that catalyzes the hydrolysis of arene and aliphatic epoxides to less reactive and more water soluble dihydrodiols by the trans addition of water. May play a role in the metabolism of endogenous lipids such as epoxide-containing fatty acids. Metabolizes the abundant endocannabinoid 2-arachidonoylglycerol (2-AG) to free arachidonic acid (AA) and glycerol. Binds 20(S)-hydroxycholesterol (20(S)-OHC). The chain is Epoxide hydrolase 1 (EPHX1) from Sus scrofa (Pig).